Reading from the N-terminus, the 149-residue chain is Myoglobin (149 aa).

An N-acetylalanine modification is found at alanine 2. One can recognise a Globin domain in the interval 2 to 143 (ADWDKVNSVW…ICSDIEKEYK (142 aa)). Histidine 89 serves as a coordination point for heme b.

The protein belongs to the globin family. As to quaternary structure, monomeric.

The protein resides in the cytoplasm. It is found in the sarcoplasm. It carries out the reaction Fe(III)-heme b-[protein] + nitric oxide + H2O = Fe(II)-heme b-[protein] + nitrite + 2 H(+). The catalysed reaction is H2O2 + AH2 = A + 2 H2O. Functionally, monomeric heme protein which primary function is to store oxygen and facilitate its diffusion within muscle tissues. Reversibly binds oxygen through a pentacoordinated heme iron and enables its timely and efficient release as needed during periods of heightened demand. Depending on the oxidative conditions of tissues and cells, and in addition to its ability to bind oxygen, it also has a nitrite reductase activity whereby it regulates the production of bioactive nitric oxide. Under stress conditions, like hypoxia and anoxia, it also protects cells against reactive oxygen species thanks to its pseudoperoxidase activity. This chain is Myoglobin (mb), found in Galeorhinus galeus (Tope shark).